A 160-amino-acid chain; its full sequence is Ribosomal RNA large subunit methyltransferase H (160 aa).

2 residues coordinate S-adenosyl-L-methionine: L76 and G108.

Belongs to the RNA methyltransferase RlmH family. Homodimer.

The protein localises to the cytoplasm. It carries out the reaction pseudouridine(1915) in 23S rRNA + S-adenosyl-L-methionine = N(3)-methylpseudouridine(1915) in 23S rRNA + S-adenosyl-L-homocysteine + H(+). Functionally, specifically methylates the pseudouridine at position 1915 (m3Psi1915) in 23S rRNA. The protein is Ribosomal RNA large subunit methyltransferase H of Rhodopseudomonas palustris (strain HaA2).